The sequence spans 387 residues: Killer cell lectin-like receptor subfamily G member 2 (387 aa).

A disordered region spans residues 1–105; the sequence is MEPPQVPAEA…SGEPAPASWA (105 aa). Over residues 15 to 27 the composition is skewed to basic and acidic residues; the sequence is ASEDSPRPERTGW. The residue at position 143 (serine 143) is a Phosphoserine. The segment at 155 to 174 is disordered; sequence QWLPRAPSPGSTWSRGSPLA. A helical transmembrane segment spans residues 241 to 261; it reads WALVVMAVLLAVCTVAVVALA. Positions 278–383 constitute a C-type lectin domain; sequence SQEQCYYLSE…CSSPRPWVCA (106 aa). 2 disulfide bridges follow: cysteine 299–cysteine 382 and cysteine 361–cysteine 374.

Its subcellular location is the membrane. The chain is Killer cell lectin-like receptor subfamily G member 2 (Klrg2) from Mus musculus (Mouse).